A 340-amino-acid polypeptide reads, in one-letter code: Guanine nucleotide-binding protein G(I)/G(S)/G(T) subunit beta-1 (340 aa).

N-acetylserine is present on Ser-2. Ser-2 bears the Phosphoserine mark. 7 WD repeats span residues Arg-46–Pro-94, Leu-95–Ala-140, Gly-141–Thr-181, Gly-182–Thr-223, Gly-224–Asp-267, Asn-268–Ala-309, and Gly-310–Asn-340. The residue at position 266 (His-266) is a Phosphohistidine.

Belongs to the WD repeat G protein beta family. As to quaternary structure, g proteins are composed of 3 units, alpha, beta and gamma. The heterodimer formed by GNB1 and GNG2 interacts with ARHGEF5. The heterodimer formed by GNB1 and GNG2 interacts with GRK2. Forms a complex with GNAO1 and GNG3. Interacts with ARHGEF18 and RASD2. Forms complexes with TAS2R14 and G-proteins; these complexes play a role in the perception of bitterness. Component of the TAS2R14-GNAI1 complex, consisting of TAS2R14, GNAI1, GNB1 and GNG2. Component of the TAS2R14-GNAT3 complex, consisting of TAS2R14, GNAT3, GNB1 and GNG2. Component of the TAS2R14-GNAS2 complex, consisting of TAS2R14, GNAS2, GNB1 and GNG2. In terms of processing, phosphorylation at His-266 by NDKB contributes to G protein activation by increasing the high energetic phosphate transfer onto GDP.

In terms of biological role, guanine nucleotide-binding proteins (G proteins) are involved as a modulator or transducer in various transmembrane signaling systems. The beta and gamma chains are required for the GTPase activity, for replacement of GDP by GTP, and for G protein-effector interaction. This Cricetulus griseus (Chinese hamster) protein is Guanine nucleotide-binding protein G(I)/G(S)/G(T) subunit beta-1 (GNB1).